The following is a 469-amino-acid chain: Neuraminidase (469 aa).

Residues 1–6 (MNPNQK) lie on the Intravirion side of the membrane. A helical membrane pass occupies residues 7–27 (IITIGSICMVVGIISLILQIG). The segment at 11-33 (GSICMVVGIISLILQIGNIISIW) is involved in apical transport and lipid raft association. Over 28–469 (NIISIWISHS…GAELPFTIDK (442 aa)) the chain is Virion surface. Residues 36–90 (HSIQTGSQNHTGICNQNIITYKNSTWVNQTYVNISNTNVVAGQDTTSVILTGNSS) form a hypervariable stalk region region. N44, N58, N63, N68, and N88 each carry an N-linked (GlcNAc...) asparagine; by host glycan. The interval 91-469 (LCPIRGWAIY…GAELPFTIDK (379 aa)) is head of neuraminidase. 8 disulfide bridges follow: C92/C417, C124/C129, C184/C231, C233/C238, C279/C292, C281/C290, C318/C335, and C421/C446. R118 contacts substrate. N146 is a glycosylation site (N-linked (GlcNAc...) asparagine; by host). The active-site Proton donor/acceptor is the D151. R152 lines the substrate pocket. A glycan (N-linked (GlcNAc...) asparagine; by host) is linked at N235. 277-278 (EE) provides a ligand contact to substrate. R293 contacts substrate. 4 residues coordinate Ca(2+): D294, G298, D324, and N344. N365 carries N-linked (GlcNAc...) asparagine; by host glycosylation. A substrate-binding site is contributed by R368. The active-site Nucleophile is the Y402.

The protein belongs to the glycosyl hydrolase 34 family. In terms of assembly, homotetramer. It depends on Ca(2+) as a cofactor. Post-translationally, N-glycosylated.

The protein localises to the virion membrane. It is found in the host apical cell membrane. It catalyses the reaction Hydrolysis of alpha-(2-&gt;3)-, alpha-(2-&gt;6)-, alpha-(2-&gt;8)- glycosidic linkages of terminal sialic acid residues in oligosaccharides, glycoproteins, glycolipids, colominic acid and synthetic substrates.. With respect to regulation, inhibited by the neuraminidase inhibitors zanamivir (Relenza) and oseltamivir (Tamiflu). These drugs interfere with the release of progeny virus from infected cells and are effective against all influenza strains. Resistance to neuraminidase inhibitors is quite rare. Its function is as follows. Catalyzes the removal of terminal sialic acid residues from viral and cellular glycoconjugates. Cleaves off the terminal sialic acids on the glycosylated HA during virus budding to facilitate virus release. Additionally helps virus spread through the circulation by further removing sialic acids from the cell surface. These cleavages prevent self-aggregation and ensure the efficient spread of the progeny virus from cell to cell. Otherwise, infection would be limited to one round of replication. Described as a receptor-destroying enzyme because it cleaves a terminal sialic acid from the cellular receptors. May facilitate viral invasion of the upper airways by cleaving the sialic acid moieties on the mucin of the airway epithelial cells. Likely to plays a role in the budding process through its association with lipid rafts during intracellular transport. May additionally display a raft-association independent effect on budding. Plays a role in the determination of host range restriction on replication and virulence. Sialidase activity in late endosome/lysosome traffic seems to enhance virus replication. In Influenza A virus (strain A/Henry/1936 H1N1), this protein is Neuraminidase.